The following is an 800-amino-acid chain: MSLVYLLIAILVIMAMILLMSKRRALAKYAGYIALVAPVISSIYFLIQIPSVAKLQYLSTSIPWIKTLDINLDLRLDGLSLMFSLIISLIGIAVFFYATQYLSSRKDNLPRFYFYLTLFMFSMIGIVLSDNTILMYIFWELTSVSSFLLISYWYNNGDSQFGAIQSFMITVFGGLALLVGFIMLYIMTGTNNITDILGQADHIKNHGLFIPMIFMFLLGAFTKSAQFPFHIWLPRAMAAPTPVSAYLHSATMVKAGIFLLLRFTPLLGLSNMYIYIVTFVGLITMLFGSITALKQWDLKGILAYSTISQLGMIMAMVGIGGGYAQHQQDAIASIYVFVLFGALFHLMNHAIFKCALFMGVGILDHEAGSRDIRILSGMRQLFPKMNLVMTIAALSMAGVPFLNGFLSKEMFLDALTQTGQLSQFSLISMIAIVFVGVIASIFTFTYALYMVKEVFWTKYDSKVFTKKNIHEPWLFSLPSLILMVLVPVIFFVPNIFGKGIIVPALRGVSGGNHQIDPLAPHVSQWHGFNIPLLLTIIIILLGSVLAIKVDWKKVFTGKIRQISVSKGYEMVYRHFEKFATKRFKRVMQDRLNQYIIMTLGIFMIIIGYGYIRIGLPKVHQLHVSEFGALEIILAIVTVTIGISLIFIRQRLTMVILNGVIGFVVTLFFIAMKAPDLALTQLVVETITTILFIVSFSRLPNVPRSNANKKREIIKISVSLLMALIVVSLIFITQQTDGLSSISDFYLKADKLTGGKNIVNAILGDFRALDTLFEGLVLIITGLGIYTLLNYQDRRGQDERE.

20 helical membrane passes run 1-21, 33-53, 78-98, 118-138, 167-187, 207-227, 241-261, 273-293, 300-320, 331-351, 387-407, 424-444, 472-492, 527-547, 595-615, 627-647, 651-671, 676-696, 712-732, and 768-788; these read MSLV…LLMS, IALV…PSVA, GLSL…FFYA, LFMF…MYIF, FMIT…LYIM, GLFI…SAQF, TPVS…FLLL, YIYI…ITAL, GILA…VGIG, IASI…NHAI, LVMT…GFLS, FSLI…IFTF, PWLF…IFFV, GFNI…VLAI, IIMT…RIGL, GALE…LIFI, LTMV…FIAM, LALT…VSFS, IIKI…IFIT, and LDTL…YTLL.

It belongs to the CPA3 antiporters (TC 2.A.63) subunit A family. In terms of assembly, may form a heterooligomeric complex that consists of seven subunits: mnhA2, mnhB2, mnhC2, mnhD2, mnhE2, mnhF2 and mnhG2.

Its subcellular location is the cell membrane. The polypeptide is Putative antiporter subunit mnhA2 (mnhA2) (Staphylococcus aureus (strain Mu3 / ATCC 700698)).